The primary structure comprises 748 residues: MLTRLREIVEKVASAPRLNEALNILVTDICLAMDTEVCSVYLADHDRRCYYLMATRGLKKPRGRTVTLAFDEGIVGLVGRLAEPINLADAQKHPSFKYIPSVKEERFRAFLGVPIIQRRQLLGVLVVQQRELRQYDESEESFLVTLATQMAAILSQSQLTALFGQYRQTRIRALPAAPGVAIAEGWQDATLPLMEQVYQASTLDPALERERLTGALEEAANEFRRYSKRFAAGAQKETAAIFDLYSHLLSDTRLRRELFAEVDKGSVAEWAVKTVIEKFAEQFAALSDNYLKERAGDLRALGQRLLFHLDDANQGPNAWPERFILVADELSATTLAELPQDRLVGVVVRDGAANSHAAIMVRALGIPTVMGADIQPSVLHRRTLIVDGYRGELLVDPEPVLLQEYQRLISEEIELSRLAEDDVNLPAQLKSGERIKVMLNAGLSPEHEEKLGSRIDGIGLYRTEIPFMLQSGFPSEEEQVAQYQGMLQMFNDKPVTLRTLDVGADKQLPYMPISEENPCLGWRGIRITLDQPEIFLIQVRAMLRANAATGNLNILLPMVTSLDEVDEARRLIERAGREVEEMIGYEIPKPRIGIMLEVPSMVFMLPHLAKRVDFISVGTNDLTQYILAVDRNNTRVANIYDSLHPAMLRALAMIAREAEIHGIDLRLCGEMAGDPMCVAILIGLGYRHLSMNGRSVARAKYLLRRIDYAEAENLAQRSLEAQLATEVRHQVAAFMERRGMGGLIRGGL.

In terms of domain architecture, GAF spans Met1–Val127. Residues Gln128–Arg170 form a linker region. The interval Ile171 to Leu748 is PTS EI. The Tele-phosphohistidine intermediate role is filled by His356. Residues Arg462 and Arg498 each coordinate phosphoenolpyruvate. Residues Glu597 and Asp621 each contribute to the Mg(2+) site. Phosphoenolpyruvate is bound by residues Asn620 to Asp621 and Arg631. Cys668 serves as the catalytic Proton donor.

The protein belongs to the PEP-utilizing enzyme family. It depends on Mg(2+) as a cofactor.

Its subcellular location is the cytoplasm. It catalyses the reaction L-histidyl-[protein] + phosphoenolpyruvate = N(pros)-phospho-L-histidyl-[protein] + pyruvate. Inhibited by GDP and FAD. Its function is as follows. Component of the phosphoenolpyruvate-dependent nitrogen-metabolic phosphotransferase system (nitrogen-metabolic PTS), that seems to be involved in regulating nitrogen metabolism. Enzyme I-Ntr transfers the phosphoryl group from phosphoenolpyruvate (PEP) to the phosphoryl carrier protein (NPr). Could function in the transcriptional regulation of sigma-54 dependent operons in conjunction with the NPr (PtsO) and EIIA-Ntr (PtsN) proteins. Enzyme I-Ntr is specific for NPr. The chain is Phosphoenolpyruvate-dependent phosphotransferase system (ptsP) from Escherichia coli (strain K12).